We begin with the raw amino-acid sequence, 237 residues long: Keratin-associated protein 5-5 (237 aa).

8 tandem repeats follow at residues 62–65, 68–71, 74–77, 159–162, 178–181, 188–191, 198–201, and 227–230. Residues 62–230 form an 8 X 4 AA repeats of C-C-X-P region; that stretch reads CCVPVCCCKP…CCCQSSCCVP (169 aa).

The protein belongs to the KRTAP type 5 family. Interacts with hair keratins. As to expression, restricted to hair root, not detected in any other tissues.

Its function is as follows. In the hair cortex, hair keratin intermediate filaments are embedded in an interfilamentous matrix, consisting of hair keratin-associated protein (KRTAP), which are essential for the formation of a rigid and resistant hair shaft through their extensive disulfide bond cross-linking with abundant cysteine residues of hair keratins. The matrix proteins include the high-sulfur and high-glycine-tyrosine keratins. This Homo sapiens (Human) protein is Keratin-associated protein 5-5 (KRTAP5-5).